The following is a 356-amino-acid chain: tRNA N6-adenosine threonylcarbamoyltransferase (356 aa).

Fe cation contacts are provided by histidine 110 and histidine 114. Residues 132 to 136 (LVSGG), aspartate 165, glycine 178, aspartate 182, and asparagine 288 contribute to the substrate site. Fe cation is bound at residue aspartate 316.

The protein belongs to the KAE1 / TsaD family. Fe(2+) is required as a cofactor.

It localises to the cytoplasm. It carries out the reaction L-threonylcarbamoyladenylate + adenosine(37) in tRNA = N(6)-L-threonylcarbamoyladenosine(37) in tRNA + AMP + H(+). Functionally, required for the formation of a threonylcarbamoyl group on adenosine at position 37 (t(6)A37) in tRNAs that read codons beginning with adenine. Is involved in the transfer of the threonylcarbamoyl moiety of threonylcarbamoyl-AMP (TC-AMP) to the N6 group of A37, together with TsaE and TsaB. TsaD likely plays a direct catalytic role in this reaction. This Maridesulfovibrio salexigens (strain ATCC 14822 / DSM 2638 / NCIMB 8403 / VKM B-1763) (Desulfovibrio salexigens) protein is tRNA N6-adenosine threonylcarbamoyltransferase.